A 239-amino-acid polypeptide reads, in one-letter code: Orotidine 5'-phosphate decarboxylase (239 aa).

Residues Asp-15, Lys-37, 64 to 73 (DLKFHDIPNT), Thr-126, Arg-187, Gln-196, Gly-216, and Arg-217 contribute to the substrate site. Catalysis depends on Lys-66, which acts as the Proton donor.

This sequence belongs to the OMP decarboxylase family. Type 1 subfamily. As to quaternary structure, homodimer.

The catalysed reaction is orotidine 5'-phosphate + H(+) = UMP + CO2. It participates in pyrimidine metabolism; UMP biosynthesis via de novo pathway; UMP from orotate: step 2/2. In terms of biological role, catalyzes the decarboxylation of orotidine 5'-monophosphate (OMP) to uridine 5'-monophosphate (UMP). In Geobacter sulfurreducens (strain ATCC 51573 / DSM 12127 / PCA), this protein is Orotidine 5'-phosphate decarboxylase.